Consider the following 776-residue polypeptide: Mitochondrial intermediate peptidase (776 aa).

The transit peptide at 1–28 directs the protein to the mitochondrion; it reads MFVRFYKRLDRQYIQSQRRWILSSNKCL. A disordered region spans residues 48-71; sequence DHWEESQAQNTSSEQDNKGKNSSY. A compositionally biased stretch (polar residues) spans 53-71; the sequence is SQAQNTSSEQDNKGKNSSY. H567 contributes to the Zn(2+) binding site. Residue E568 is part of the active site. Residues H571 and H574 each coordinate Zn(2+).

This sequence belongs to the peptidase M3 family. Requires Zn(2+) as cofactor.

It localises to the mitochondrion matrix. The enzyme catalyses Release of an N-terminal octapeptide as second stage of processing of some proteins imported into the mitochondrion.. Functionally, cleaves proteins, imported into the mitochondrion, to their mature size. While most mitochondrial precursor proteins are processed to the mature form in one step by mitochondrial processing peptidase (MPP), the sequential cleavage by MIP of an octapeptide after initial processing by MPP is a required step for a subgroup of nuclear-encoded precursor proteins destined for the matrix or the inner membrane. This Eremothecium gossypii (strain ATCC 10895 / CBS 109.51 / FGSC 9923 / NRRL Y-1056) (Yeast) protein is Mitochondrial intermediate peptidase (OCT1).